Here is a 79-residue protein sequence, read N- to C-terminus: MKTLLLTLVMVTIMCLDLGYTLTCYKGYHDTVVCKPHETICYEYFIPATHGNVITTRGCSTSCPGGIRPVCCSTDLCNN.

Positions 1–21 are cleaved as a signal peptide; sequence MKTLLLTLVMVTIMCLDLGYT. 4 cysteine pairs are disulfide-bonded: C24–C41, C34–C59, C63–C71, and C72–C77.

This sequence belongs to the three-finger toxin family. Short-chain subfamily. Type III alpha-neurotoxin sub-subfamily. As to expression, expressed by the venom gland.

It localises to the secreted. Its function is as follows. Binds with high affinity to muscle nicotinic acetylcholine receptor (nAChR) and hinders acetylcholine binding to the receptor, thereby impairing neuromuscular transmission. Causes muscle paralysis, spasms and increased respiration. This chain is Short neurotoxin 8, found in Pseudonaja textilis (Eastern brown snake).